The sequence spans 325 residues: 5-dehydro-2-deoxygluconokinase (325 aa).

Belongs to the carbohydrate kinase PfkB family.

It carries out the reaction 5-dehydro-2-deoxy-D-gluconate + ATP = 6-phospho-5-dehydro-2-deoxy-D-gluconate + ADP + H(+). The protein operates within polyol metabolism; myo-inositol degradation into acetyl-CoA; acetyl-CoA from myo-inositol: step 5/7. Its function is as follows. Catalyzes the phosphorylation of 5-dehydro-2-deoxy-D-gluconate (2-deoxy-5-keto-D-gluconate or DKG) to 6-phospho-5-dehydro-2-deoxy-D-gluconate (DKGP). The protein is 5-dehydro-2-deoxygluconokinase of Listeria monocytogenes serotype 4a (strain HCC23).